Here is a 637-residue protein sequence, read N- to C-terminus: DNA mismatch repair protein MutL (637 aa).

Residues 343–352 (QQSPDRQVSP) are compositionally biased toward polar residues. Residues 343–411 (QQSPDRQVSP…SARNGDVSLP (69 aa)) form a disordered region. Over residues 365–380 (SIERKPSVSYDVRDSH) the composition is skewed to basic and acidic residues. The span at 388 to 397 (YSSGSSSYRS) shows a compositional bias: low complexity.

Belongs to the DNA mismatch repair MutL/HexB family.

In terms of biological role, this protein is involved in the repair of mismatches in DNA. It is required for dam-dependent methyl-directed DNA mismatch repair. May act as a 'molecular matchmaker', a protein that promotes the formation of a stable complex between two or more DNA-binding proteins in an ATP-dependent manner without itself being part of a final effector complex. In Shewanella halifaxensis (strain HAW-EB4), this protein is DNA mismatch repair protein MutL.